The following is a 298-amino-acid chain: Probable endonuclease 4 (298 aa).

Zn(2+) is bound by residues His-69, His-111, Glu-146, Asp-180, His-183, His-215, Asp-228, His-230, and Glu-260.

This sequence belongs to the AP endonuclease 2 family. Zn(2+) is required as a cofactor.

The enzyme catalyses Endonucleolytic cleavage to 5'-phosphooligonucleotide end-products.. In terms of biological role, endonuclease IV plays a role in DNA repair. It cleaves phosphodiester bonds at apurinic or apyrimidinic (AP) sites, generating a 3'-hydroxyl group and a 5'-terminal sugar phosphate. The polypeptide is Probable endonuclease 4 (Bacillus cereus (strain B4264)).